Consider the following 315-residue polypeptide: Methionyl-tRNA formyltransferase (315 aa).

Residue Ser-113 to Pro-116 coordinates (6S)-5,6,7,8-tetrahydrofolate.

This sequence belongs to the Fmt family.

It carries out the reaction L-methionyl-tRNA(fMet) + (6R)-10-formyltetrahydrofolate = N-formyl-L-methionyl-tRNA(fMet) + (6S)-5,6,7,8-tetrahydrofolate + H(+). Its function is as follows. Attaches a formyl group to the free amino group of methionyl-tRNA(fMet). The formyl group appears to play a dual role in the initiator identity of N-formylmethionyl-tRNA by promoting its recognition by IF2 and preventing the misappropriation of this tRNA by the elongation apparatus. In Klebsiella pneumoniae subsp. pneumoniae (strain ATCC 700721 / MGH 78578), this protein is Methionyl-tRNA formyltransferase.